Consider the following 298-residue polypeptide: NFU1 iron-sulfur cluster scaffold homolog, mitochondrial (298 aa).

The segment at 190-258 (IKELLDTRIR…IPEVESVEQV (69 aa)) is nifU. Positions 227 and 230 each coordinate [4Fe-4S] cluster. A compositionally biased stretch (polar residues) spans 279–288 (QKESVNQPNA). A disordered region spans residues 279–298 (QKESVNQPNAPVNIGGGTPN).

Belongs to the NifU family.

The protein localises to the mitochondrion. Molecular scaffold for [Fe-S] cluster assembly of mitochondrial iron-sulfur proteins. The sequence is that of NFU1 iron-sulfur cluster scaffold homolog, mitochondrial from Drosophila virilis (Fruit fly).